A 354-amino-acid chain; its full sequence is MKIAVLLSGGVDSSVALYTMIQKGYKNIKCYYLKIWLEDELSYIGECPWEEDINYVEAVCTKFNVPYEIISLQDEYYKRVVTYAIEELKIGNTPSPDIFCNQRIKFGAFFDKINEHYDLIVTGHYAKIENKNNHYILKQAKDKIKDQSYFLSHLSREQISKLHFPLGDLLKTEIRQIAHKIDLPNKNRKDSQGICFLGKIKYDEFIKYHLGELKGNIIEQETGKILGTHNGYWFFTIGQRKGIKLSHGPWFVTEKDIQNNIIYISNSVNYLAQGKHQFLVHKTNWINKPVNNIDLSAKIRHGEKKIKCKIEMLKNDIIKVDLEEKDYGISPGQFCIFYQEDECLGGAQILQTLT.

Residues 6 to 13 (LLSGGVDS) and leucine 33 each bind ATP. Residue cysteine 100 is the Nucleophile of the active site. A disulfide bridge connects residues cysteine 100 and cysteine 195. Glycine 123 serves as a coordination point for ATP. The interaction with tRNA stretch occupies residues 145–147 (KDQ). Cysteine 195 acts as the Cysteine persulfide intermediate in catalysis.

This sequence belongs to the MnmA/TRMU family.

It localises to the cytoplasm. The enzyme catalyses S-sulfanyl-L-cysteinyl-[protein] + uridine(34) in tRNA + AH2 + ATP = 2-thiouridine(34) in tRNA + L-cysteinyl-[protein] + A + AMP + diphosphate + H(+). In terms of biological role, catalyzes the 2-thiolation of uridine at the wobble position (U34) of tRNA, leading to the formation of s(2)U34. The chain is tRNA-specific 2-thiouridylase MnmA from Borrelia hermsii (strain HS1 / DAH).